A 449-amino-acid polypeptide reads, in one-letter code: Pentalenene oxygenase (449 aa).

A helical membrane pass occupies residues 251–273 (VITVMAAGTETVAGTLTWIFHLL). Position 393 (C393) interacts with heme.

This sequence belongs to the cytochrome P450 family.

The protein resides in the membrane. It carries out the reaction pentalenene + 4 reduced [2Fe-2S]-[ferredoxin] + 2 O2 + 4 H(+) = pentalen-13-al + 4 oxidized [2Fe-2S]-[ferredoxin] + 3 H2O. It participates in antibiotic biosynthesis; neopentalenolactone biosynthesis. Functionally, catalyzes the conversion of pentalenene to pentalen-13-al by stepwise oxidation via pentalen-13-ol, a precursor of neopentalenolactone antibiotic. This is Pentalenene oxygenase (ptlI) from Streptomyces avermitilis (strain ATCC 31267 / DSM 46492 / JCM 5070 / NBRC 14893 / NCIMB 12804 / NRRL 8165 / MA-4680).